The chain runs to 288 residues: ATP synthase gamma chain (288 aa).

Belongs to the ATPase gamma chain family. In terms of assembly, F-type ATPases have 2 components, CF(1) - the catalytic core - and CF(0) - the membrane proton channel. CF(1) has five subunits: alpha(3), beta(3), gamma(1), delta(1), epsilon(1). CF(0) has three main subunits: a, b and c.

It is found in the cell membrane. Its function is as follows. Produces ATP from ADP in the presence of a proton gradient across the membrane. The gamma chain is believed to be important in regulating ATPase activity and the flow of protons through the CF(0) complex. In Bacillus pumilus (strain SAFR-032), this protein is ATP synthase gamma chain.